The sequence spans 98 residues: NADH-ubiquinone oxidoreductase chain 4L (98 aa).

Transmembrane regions (helical) follow at residues 1-21 (MIPT…GMLI), 29-49 (SLLC…LIAL), and 61-81 (IILL…LVSI).

This sequence belongs to the complex I subunit 4L family. Core subunit of respiratory chain NADH dehydrogenase (Complex I) which is composed of 45 different subunits.

It is found in the mitochondrion inner membrane. It carries out the reaction a ubiquinone + NADH + 5 H(+)(in) = a ubiquinol + NAD(+) + 4 H(+)(out). Its function is as follows. Core subunit of the mitochondrial membrane respiratory chain NADH dehydrogenase (Complex I) which catalyzes electron transfer from NADH through the respiratory chain, using ubiquinone as an electron acceptor. Part of the enzyme membrane arm which is embedded in the lipid bilayer and involved in proton translocation. This Macaca ochreata (Booted macaque) protein is NADH-ubiquinone oxidoreductase chain 4L (MT-ND4L).